The following is a 599-amino-acid chain: MKNIRNFSIIAHIDHGKSTLSDRIIQICGGLSDREMEAQVLDSMDLERERGITIKAQSVTLDFKASDGETYQLNFIDTPGHVDFSYEVSRSLAACEGALLVVDAGQGVEAQTLANCYTAMEMDLEVVPVLNKIDLPAADPERVAEEIEDIVGIDATDAVRCSAKTGVGVTDVLERLVRDIPPPQGDPDGPLQALIIDSWFDNYLGVVSLVRIKNGTMRKGDKIKVMSTGQTYNADRLGIFTPKQVDRSELKCGEVGWLVCAIKDILGAPVGDTLTSARNPAEKALPGFKKVKPQVYAGLFPVSSDDYESFRDALGKLSLNDASLFYEPESSSALGFGFRCGFLGLLHMEIIQERLEREYDLDLITTAPTVVYEVETTAKETIYVDSPSKLPPLNNIYELREPIAECHMLLPQAYLGNVITLCIEKRGVQTNMVYHGNQVALTYEIPMAEVVLDFFDRLKSTSRGYASLDYNFKRFQASDMVRVDVLINNERVDALALITHRDNSQSRGRELVEKMKDLIPRQQFDIAIQAAIGTHIIARSTVKQLRKNVLAKCYGGDISRKKKLLQKQKEGKKRMKQIGNVELPQEAFLAILHVGKDNK.

The tr-type G domain maps to K2–Q184. GTP contacts are provided by residues D14–T19 and N131–D134.

Belongs to the TRAFAC class translation factor GTPase superfamily. Classic translation factor GTPase family. LepA subfamily.

The protein resides in the cell inner membrane. The enzyme catalyses GTP + H2O = GDP + phosphate + H(+). In terms of biological role, required for accurate and efficient protein synthesis under certain stress conditions. May act as a fidelity factor of the translation reaction, by catalyzing a one-codon backward translocation of tRNAs on improperly translocated ribosomes. Back-translocation proceeds from a post-translocation (POST) complex to a pre-translocation (PRE) complex, thus giving elongation factor G a second chance to translocate the tRNAs correctly. Binds to ribosomes in a GTP-dependent manner. This chain is Elongation factor 4, found in Salmonella paratyphi C (strain RKS4594).